The following is a 227-amino-acid chain: ATP-dependent Clp protease proteolytic subunit 1 (227 aa).

The active-site Nucleophile is the S124. H149 is an active-site residue.

Belongs to the peptidase S14 family. As to quaternary structure, fourteen ClpP subunits assemble into 2 heptameric rings which stack back to back to give a disk-like structure with a central cavity, resembling the structure of eukaryotic proteasomes.

The protein resides in the cytoplasm. It carries out the reaction Hydrolysis of proteins to small peptides in the presence of ATP and magnesium. alpha-casein is the usual test substrate. In the absence of ATP, only oligopeptides shorter than five residues are hydrolyzed (such as succinyl-Leu-Tyr-|-NHMec, and Leu-Tyr-Leu-|-Tyr-Trp, in which cleavage of the -Tyr-|-Leu- and -Tyr-|-Trp bonds also occurs).. Its function is as follows. Cleaves peptides in various proteins in a process that requires ATP hydrolysis. Has a chymotrypsin-like activity. Plays a major role in the degradation of misfolded proteins. The sequence is that of ATP-dependent Clp protease proteolytic subunit 1 from Rhodopirellula baltica (strain DSM 10527 / NCIMB 13988 / SH1).